Here is a 1070-residue protein sequence, read N- to C-terminus: DNA-directed RNA polymerase subunit beta (1070 aa).

Belongs to the RNA polymerase beta chain family. In terms of assembly, in plastids the minimal PEP RNA polymerase catalytic core is composed of four subunits: alpha, beta, beta', and beta''. When a (nuclear-encoded) sigma factor is associated with the core the holoenzyme is formed, which can initiate transcription.

It is found in the plastid. The protein localises to the chloroplast. The enzyme catalyses RNA(n) + a ribonucleoside 5'-triphosphate = RNA(n+1) + diphosphate. In terms of biological role, DNA-dependent RNA polymerase catalyzes the transcription of DNA into RNA using the four ribonucleoside triphosphates as substrates. The protein is DNA-directed RNA polymerase subunit beta of Morus indica (Mulberry).